The following is a 133-amino-acid chain: Rodlin protein RdlB (133 aa).

Positions 1-28 (MIKKVVAYAAIAASVMGASAAAAPQAMA) are cleaved as a signal peptide. Amyloid-forming stretches follow at residues 45 to 57 (QYFG…GNMS) and 59 to 70 (QMALIQGSFNKP). The required for amyloid formation stretch occupies residues 45–70 (QYFGNSMTTGNMSPQMALIQGSFNKP).

Belongs to the rodlin family.

The protein localises to the secreted. The protein resides in the cell wall. It localises to the spore wall. Functionally, forms part of the rodlet layer on the spore surface; despite their high similarity both RdlA and RdlB are required for rodlet formation. Plays a role in cell adhesion to polystyrene plates. Forms amyloid-like fibrils in vitro composed of stacked beta-sheets. The chain is Rodlin protein RdlB from Streptomyces coelicolor (strain ATCC BAA-471 / A3(2) / M145).